Consider the following 223-residue polypeptide: Putative N-acetylmannosamine-6-phosphate 2-epimerase (223 aa).

It belongs to the NanE family.

The catalysed reaction is an N-acyl-D-glucosamine 6-phosphate = an N-acyl-D-mannosamine 6-phosphate. Its pathway is amino-sugar metabolism; N-acetylneuraminate degradation; D-fructose 6-phosphate from N-acetylneuraminate: step 3/5. Functionally, converts N-acetylmannosamine-6-phosphate (ManNAc-6-P) to N-acetylglucosamine-6-phosphate (GlcNAc-6-P). In Staphylococcus haemolyticus (strain JCSC1435), this protein is Putative N-acetylmannosamine-6-phosphate 2-epimerase.